Here is a 482-residue protein sequence, read N- to C-terminus: Variant surface glycoprotein ANTAT 1.1C (482 aa).

The first 8 residues, 1-8 (LHPQQALA), serve as a signal peptide directing secretion. 2 disulfide bridges follow: Cys24–Cys151 and Cys133–Cys188. N-linked (GlcNAc...) asparagine glycosylation is present at Asn92. Asn398 and Asn411 each carry an N-linked (GlcNAc...) asparagine glycan. Asp459 carries GPI-anchor amidated aspartate lipidation. Positions 460–482 (SSILVTKKFALSLVSAAFASLLF) are cleaved as a propeptide — removed in mature form.

The protein resides in the cell membrane. In terms of biological role, VSG forms a coat on the surface of the parasite. The trypanosome evades the immune response of the host by expressing a series of antigenically distinct VSGs from an estimated 1000 VSG genes. The polypeptide is Variant surface glycoprotein ANTAT 1.1C (Trypanosoma brucei brucei).